The sequence spans 305 residues: CRISPR-associated endonuclease Cas1 (305 aa).

Residues 96 to 278 (SDKLLYQAKL…EDVLAAGEIQ (183 aa)) are sufficient for cleavage of ssRNA, ssDNA and Holliday junction DNA. Glutamate 141, histidine 208, and aspartate 221 together coordinate Mg(2+). The segment at 278–305 (QPPAPPEDAQPVAIPLPVSLGDAGHRSS) is disordered.

This sequence belongs to the CRISPR-associated endonuclease Cas1 family. In terms of assembly, homodimer. Part of the Cas1-Cas2 complex. Interacts with RecB, RecC, RuvB, CasC and CasE. Forms a hexamer with 2 Cas1 dimers sandwiching a Cas2 dimer. The DNA lies across a flat surface extending from 1 Cas1 dimer, across the Cas2 dimer and contacting the other Cas1 dimer. Only 1 Cas1 protein from each dimer is catalytic, the other interacts with the Cas2 dimer and possibly target DNA. Mg(2+) serves as cofactor.

It localises to the cytoplasm. Nuclease activity partially inhibited by CasE. CRISPR (clustered regularly interspaced short palindromic repeat), is an adaptive immune system that provides protection against mobile genetic elements (viruses, transposable elements and conjugative plasmids). CRISPR clusters contain sequences complementary to antecedent mobile elements and target invading nucleic acids. CRISPR clusters are transcribed and processed into CRISPR RNA (crRNA). The Cas1-Cas2 complex is involved in CRISPR adaptation, the first stage of CRISPR immunity, being required for the addition/removal of CRISPR spacers at the leader end of the CRISPR locus. The Cas1-Cas2 complex introduces staggered nicks into both strands of the CRISPR array near the leader repeat and joins the 5'-ends of the repeat strands with the 3'-ends of the new spacer sequence. Spacer DNA integration requires supercoiled target DNA and 3'-OH ends on the inserted (spacer) DNA and probably initiates with a nucleophilic attack of the C 3'-OH end of the protospacer on the minus strand of the first repeat sequence. Expression of Cas1-Cas2 in a strain lacking both genes permits spacer acquisition. Non-specifically binds DNA; the Cas1-Cas2 complex preferentially binds CRISPR-locus DNA. Highest binding is seen to a dual forked DNA complex with 3'-overhangs and a protospacer-adjacent motif-complement specifically positioned. The protospacer DNA lies across a flat surface extending from 1 Cas1 dimer, across the Cas2 dimer and contacting the other Cas1 dimer; the 23 bp-long ds section of the DNA is bracketed by 1 Tyr-22 from each of the Cas1 dimers. Cas1 cuts within the 3'-overhang, to generate a 33-nucleotide DNA that is probably incorporated into the CRISPR leader by a cut-and-paste mechanism. Cas1 alone endonucleolytically cleaves linear ssRNA, ssDNA and short (34 base) dsDNA as well as branched DNA substrates such as Holliday junctions, replication forks and 5'-flap DNA substrates. In vitro catalyzes a concerted transesterification reaction on branched DNA, as would be expected during integration of protospacers into the CRISPR leader sequence; Cas2 is not required in vitro. This reaction requires a 3'-OH group at the branch point. Genetic interactions suggest Cas1 interacts with components of the RecBC and RuvB DNA repair systems. The protein is CRISPR-associated endonuclease Cas1 (ygbT) of Escherichia coli (strain K12).